Reading from the N-terminus, the 156-residue chain is Small ribosomal subunit protein uS7 (156 aa).

The protein belongs to the universal ribosomal protein uS7 family. Part of the 30S ribosomal subunit. Contacts proteins S9 and S11.

In terms of biological role, one of the primary rRNA binding proteins, it binds directly to 16S rRNA where it nucleates assembly of the head domain of the 30S subunit. Is located at the subunit interface close to the decoding center, probably blocks exit of the E-site tRNA. The polypeptide is Small ribosomal subunit protein uS7 (Streptococcus equi subsp. equi (strain 4047)).